The chain runs to 276 residues: uncharacterized protein (276 aa).

Residues 1–25 (MNKKRLLPKASLGALFMLFGTALTA) form the signal peptide. A lipid anchor (N-palmitoyl cysteine) is attached at cysteine 26. Residue cysteine 26 is the site of S-diacylglycerol cysteine attachment.

It belongs to the MG439/MG440 family.

The protein localises to the cell membrane. This is an uncharacterized protein from Mycoplasma pneumoniae (strain ATCC 29342 / M129 / Subtype 1) (Mycoplasmoides pneumoniae).